We begin with the raw amino-acid sequence, 425 residues long: GTPase Obg (425 aa).

The 158-residue stretch at 1 to 158 (MFKDYAKIHV…LWLELELKLL (158 aa)) folds into the Obg domain. The OBG-type G domain occupies 159 to 329 (ADVGLVGFPN…LIYRTYRLLE (171 aa)). GTP contacts are provided by residues 165–172 (GFPNAGKS), 190–194 (FTTLE), 212–215 (DIPG), 282–285 (NKTD), and 310–312 (SAL). Positions 172 and 192 each coordinate Mg(2+). Positions 341–421 (VPDERETDVT…IGRFEFEYSE (81 aa)) constitute an OCT domain.

It belongs to the TRAFAC class OBG-HflX-like GTPase superfamily. OBG GTPase family. In terms of assembly, monomer. The cofactor is Mg(2+).

Its subcellular location is the cytoplasm. Functionally, an essential GTPase which binds GTP, GDP and possibly (p)ppGpp with moderate affinity, with high nucleotide exchange rates and a fairly low GTP hydrolysis rate. Plays a role in control of the cell cycle, stress response, ribosome biogenesis and in those bacteria that undergo differentiation, in morphogenesis control. In Desulforudis audaxviator (strain MP104C), this protein is GTPase Obg.